We begin with the raw amino-acid sequence, 306 residues long: IN2-2 protein (306 aa).

The active-site Proton donor is Tyr64. His131 lines the substrate pocket. An NADP(+)-binding site is contributed by 210–220 (SPLGRGFFSSG). Residues 272 to 306 (LGSPPRKRRLPHTWHNKNRQLQPERGGTVCEAYTG) are disordered. Over residues 276–289 (PRKRRLPHTWHNKN) the composition is skewed to basic residues.

Belongs to the aldo/keto reductase family. Aldo/keto reductase 2 subfamily. Leaves and roots.

In Zea mays (Maize), this protein is IN2-2 protein (IN2-2).